Reading from the N-terminus, the 267-residue chain is REH2-associated factor 2 (267 aa).

In terms of assembly, component of the REH2-associated complex (REH2C) composed of helicase REH2, associated factors H2F1 and H2F2, and mRNAs at various editing stages; the formation of the complex is RNA-independent. Interacts with various editing complexes including the RNA editing core (RECC) complex, the gRNA-binding (GRBC) complex (also known as the MRB1 complex) and the RNA editing mediator (REMC) complex.

It is found in the mitochondrion. May play a role in mitochondrial mRNA editing by facilitating the association of the gRNA-binding (GRBC) complex with the RNA editing core (RECC) complex. However, appears to be dispensable for mRNA editing per se. The protein is REH2-associated factor 2 of Trypanosoma brucei brucei (strain 927/4 GUTat10.1).